Reading from the N-terminus, the 251-residue chain is 1-(5-phosphoribosyl)-5-[(5-phosphoribosylamino)methylideneamino] imidazole-4-carboxamide isomerase (251 aa).

D7 (proton acceptor) is an active-site residue. Catalysis depends on D131, which acts as the Proton donor.

This sequence belongs to the HisA/HisF family.

The protein localises to the cytoplasm. The enzyme catalyses 1-(5-phospho-beta-D-ribosyl)-5-[(5-phospho-beta-D-ribosylamino)methylideneamino]imidazole-4-carboxamide = 5-[(5-phospho-1-deoxy-D-ribulos-1-ylimino)methylamino]-1-(5-phospho-beta-D-ribosyl)imidazole-4-carboxamide. It functions in the pathway amino-acid biosynthesis; L-histidine biosynthesis; L-histidine from 5-phospho-alpha-D-ribose 1-diphosphate: step 4/9. In Blochmanniella floridana, this protein is 1-(5-phosphoribosyl)-5-[(5-phosphoribosylamino)methylideneamino] imidazole-4-carboxamide isomerase.